A 147-amino-acid chain; its full sequence is Putative pre-16S rRNA nuclease (147 aa).

It belongs to the YqgF nuclease family.

The protein localises to the cytoplasm. Could be a nuclease involved in processing of the 5'-end of pre-16S rRNA. This is Putative pre-16S rRNA nuclease from Acinetobacter baylyi (strain ATCC 33305 / BD413 / ADP1).